Reading from the N-terminus, the 500-residue chain is NAD(P)H-quinone oxidoreductase subunit 2, chloroplastic (500 aa).

Transmembrane regions (helical) follow at residues 15–35 (ILPESILIFCLLTTLIIDLSL), 42–62 (WIIYLNTIGLILSGLFLCLQW), 79–99 (FSIAFRFCIIIASLLSLLLSI), 109–129 (LMEFVIFLLGATIGGMFLCGA), 132–152 (LITIFTSLECLGLSSYLLAGY), 167–187 (LLVGGASSAILAYGFSWLYGL), 201–221 (LIFADFVNPLIKWITLTCIIV), 247–267 (VVAFLSVASKTAGLALTIRII), 278–298 (WQFLLQILACLTMIVGNLVAI), 306–326 (MLAYSSISQAGYLMIGIISST), 334–354 (LVYMLIYIFMNLGAFGCVILF), 377–397 (ASCLTIFLLSLGGIPPFAGFF), and 400–420 (IYLFWSGWQAGLYILTFVGLL).

It belongs to the complex I subunit 2 family. In terms of assembly, NDH is composed of at least 16 different subunits, 5 of which are encoded in the nucleus.

It is found in the plastid. The protein resides in the chloroplast thylakoid membrane. It carries out the reaction a plastoquinone + NADH + (n+1) H(+)(in) = a plastoquinol + NAD(+) + n H(+)(out). The enzyme catalyses a plastoquinone + NADPH + (n+1) H(+)(in) = a plastoquinol + NADP(+) + n H(+)(out). Its function is as follows. NDH shuttles electrons from NAD(P)H:plastoquinone, via FMN and iron-sulfur (Fe-S) centers, to quinones in the photosynthetic chain and possibly in a chloroplast respiratory chain. The immediate electron acceptor for the enzyme in this species is believed to be plastoquinone. Couples the redox reaction to proton translocation, and thus conserves the redox energy in a proton gradient. In Chaetosphaeridium globosum (Charophycean green alga), this protein is NAD(P)H-quinone oxidoreductase subunit 2, chloroplastic.